A 131-amino-acid chain; its full sequence is Profilin-6 (131 aa).

This sequence belongs to the profilin family. As to quaternary structure, occurs in many kinds of cells as a complex with monomeric actin in a 1:1 ratio.

The protein resides in the cytoplasm. Its subcellular location is the cytoskeleton. Functionally, binds to actin and affects the structure of the cytoskeleton. At high concentrations, profilin prevents the polymerization of actin, whereas it enhances it at low concentrations. By binding to PIP2, it inhibits the formation of IP3 and DG. This is Profilin-6 from Hevea brasiliensis (Para rubber tree).